A 189-amino-acid chain; its full sequence is Thymidine kinase (189 aa).

Residues Gly-9–Thr-16 and Asp-85–Gln-88 contribute to the ATP site. The active-site Proton acceptor is Glu-86. Residues Cys-143, Cys-146, Cys-180, and His-183 each contribute to the Zn(2+) site.

Belongs to the thymidine kinase family. As to quaternary structure, homotetramer.

Its subcellular location is the cytoplasm. It carries out the reaction thymidine + ATP = dTMP + ADP + H(+). The chain is Thymidine kinase from Streptococcus agalactiae serotype Ia (strain ATCC 27591 / A909 / CDC SS700).